We begin with the raw amino-acid sequence, 611 residues long: ATP-dependent zinc metalloprotease FtsH 1 (611 aa).

Residues Met-1–Lys-6 are Cytoplasmic-facing. The helical transmembrane segment at Ile-7–Leu-27 threads the bilayer. At Tyr-28–Trp-107 the chain is on the extracellular side. Residues Trp-108–Phe-128 traverse the membrane as a helical segment. Phe-124 to Gln-131 contributes to the ATP binding site. Residues Met-129 to Ala-611 lie on the Cytoplasmic side of the membrane. His-423 serves as a coordination point for Zn(2+). Glu-424 is a catalytic residue. Residues His-427 and Asp-499 each coordinate Zn(2+).

This sequence in the central section; belongs to the AAA ATPase family. The protein in the C-terminal section; belongs to the peptidase M41 family. As to quaternary structure, homohexamer. Zn(2+) is required as a cofactor.

The protein localises to the cell membrane. Acts as a processive, ATP-dependent zinc metallopeptidase for both cytoplasmic and membrane proteins. Plays a role in the quality control of integral membrane proteins. In Thermoanaerobacter sp. (strain X514), this protein is ATP-dependent zinc metalloprotease FtsH 1.